The chain runs to 117 residues: Large ribosomal subunit protein bL20 (117 aa).

It belongs to the bacterial ribosomal protein bL20 family.

In terms of biological role, binds directly to 23S ribosomal RNA and is necessary for the in vitro assembly process of the 50S ribosomal subunit. It is not involved in the protein synthesizing functions of that subunit. The polypeptide is Large ribosomal subunit protein bL20 (Citrifermentans bemidjiense (strain ATCC BAA-1014 / DSM 16622 / JCM 12645 / Bem) (Geobacter bemidjiensis)).